Here is a 294-residue protein sequence, read N- to C-terminus: tRNA pseudouridine synthase B (294 aa).

Asp39 functions as the Nucleophile in the catalytic mechanism.

Belongs to the pseudouridine synthase TruB family. Type 1 subfamily.

The catalysed reaction is uridine(55) in tRNA = pseudouridine(55) in tRNA. Functionally, responsible for synthesis of pseudouridine from uracil-55 in the psi GC loop of transfer RNAs. This is tRNA pseudouridine synthase B from Streptococcus pyogenes serotype M6 (strain ATCC BAA-946 / MGAS10394).